A 96-amino-acid polypeptide reads, in one-letter code: MPRSPLIVAVVAAALFAIVRGRDPLLDAMRREGAMDFWSAGCYARGVPLSEPPQALVVFYVALTAVMVAVALYAYGLCFRLMGASGPNKKESRGRG.

The first 21 residues, 1-21 (MPRSPLIVAVVAAALFAIVRG), serve as a signal peptide directing secretion. Over 22–54 (RDPLLDAMRREGAMDFWSAGCYARGVPLSEPPQ) the chain is Virion surface. A helical membrane pass occupies residues 55 to 75 (ALVVFYVALTAVMVAVALYAY). Residues 76 to 96 (GLCFRLMGASGPNKKESRGRG) are Intravirion-facing.

The protein belongs to the herpesviridae glycoprotein N family. In terms of assembly, interacts (via N-terminus) with gM (via N-terminus). The gM-gN heterodimer forms the gCII complex.

The protein resides in the virion membrane. It localises to the host membrane. The protein localises to the host Golgi apparatus. Its subcellular location is the host trans-Golgi network. In terms of biological role, envelope glycoprotein necessary for proper maturation of gM and modulation of its membrane fusion activity. Also plays a critical role in virion morphogenesis. This Bos taurus (Bovine) protein is Envelope glycoprotein N.